Consider the following 210-residue polypeptide: Thymidylate kinase (210 aa).

10–17 provides a ligand contact to ATP; the sequence is GLEGAGKT.

The protein belongs to the thymidylate kinase family.

The enzyme catalyses dTMP + ATP = dTDP + ADP. In terms of biological role, phosphorylation of dTMP to form dTDP in both de novo and salvage pathways of dTTP synthesis. This is Thymidylate kinase from Actinobacillus succinogenes (strain ATCC 55618 / DSM 22257 / CCUG 43843 / 130Z).